Reading from the N-terminus, the 137-residue chain is Holo-[acyl-carrier-protein] synthase (137 aa).

Mg(2+) contacts are provided by Asp-8 and Glu-58.

It belongs to the P-Pant transferase superfamily. AcpS family. The cofactor is Mg(2+).

It localises to the cytoplasm. The enzyme catalyses apo-[ACP] + CoA = holo-[ACP] + adenosine 3',5'-bisphosphate + H(+). Transfers the 4'-phosphopantetheine moiety from coenzyme A to a Ser of acyl-carrier-protein. The chain is Holo-[acyl-carrier-protein] synthase from Lactobacillus delbrueckii subsp. bulgaricus (strain ATCC BAA-365 / Lb-18).